The chain runs to 312 residues: Ribosomal protein L11 methyltransferase (312 aa).

Thr163, Gly184, Asp206, and Asn248 together coordinate S-adenosyl-L-methionine.

This sequence belongs to the methyltransferase superfamily. PrmA family.

The protein resides in the cytoplasm. It carries out the reaction L-lysyl-[protein] + 3 S-adenosyl-L-methionine = N(6),N(6),N(6)-trimethyl-L-lysyl-[protein] + 3 S-adenosyl-L-homocysteine + 3 H(+). Methylates ribosomal protein L11. This Clostridium botulinum (strain Loch Maree / Type A3) protein is Ribosomal protein L11 methyltransferase.